We begin with the raw amino-acid sequence, 161 residues long: Sec-independent protein translocase protein TatB (161 aa).

Residues 2–22 (FNDIGALELVTLVVLAVLVFG) form a helical membrane-spanning segment. The interval 102 to 161 (DAVHGRDAESSSSGSSSGSSSAASGNGRVDMSKKPEKPEKPGKTDKPAADDRPPFDMDAT) is disordered. Residues 111-126 (SSSSGSSSGSSSAASG) are compositionally biased toward low complexity. The segment covering 131-161 (DMSKKPEKPEKPGKTDKPAADDRPPFDMDAT) has biased composition (basic and acidic residues).

Belongs to the TatB family. In terms of assembly, the Tat system comprises two distinct complexes: a TatABC complex, containing multiple copies of TatA, TatB and TatC subunits, and a separate TatA complex, containing only TatA subunits. Substrates initially bind to the TatABC complex, which probably triggers association of the separate TatA complex to form the active translocon.

The protein resides in the cell membrane. Part of the twin-arginine translocation (Tat) system that transports large folded proteins containing a characteristic twin-arginine motif in their signal peptide across membranes. Together with TatC, TatB is part of a receptor directly interacting with Tat signal peptides. TatB may form an oligomeric binding site that transiently accommodates folded Tat precursor proteins before their translocation. In Streptomyces coelicolor (strain ATCC BAA-471 / A3(2) / M145), this protein is Sec-independent protein translocase protein TatB.